The primary structure comprises 205 residues: Holliday junction branch migration complex subunit RuvA (205 aa).

The domain I stretch occupies residues 1 to 64; the sequence is MIGKLKGLID…EDQIKLFGFR (64 aa). The tract at residues 65–143 is domain II; the sequence is TDHEREWFRL…ALSNVDPAVV (79 aa). Residues 144-154 are flexible linker; that stretch reads QLSGALDDNRA. The segment at 154–205 is domain III; that stretch reads APRPVTDAISALVNLGYGQPQAAAAIAAAARAAGDDAATAQLIKLGLKELSK.

The protein belongs to the RuvA family. Homotetramer. Forms an RuvA(8)-RuvB(12)-Holliday junction (HJ) complex. HJ DNA is sandwiched between 2 RuvA tetramers; dsDNA enters through RuvA and exits via RuvB. An RuvB hexamer assembles on each DNA strand where it exits the tetramer. Each RuvB hexamer is contacted by two RuvA subunits (via domain III) on 2 adjacent RuvB subunits; this complex drives branch migration. In the full resolvosome a probable DNA-RuvA(4)-RuvB(12)-RuvC(2) complex forms which resolves the HJ.

It localises to the cytoplasm. In terms of biological role, the RuvA-RuvB-RuvC complex processes Holliday junction (HJ) DNA during genetic recombination and DNA repair, while the RuvA-RuvB complex plays an important role in the rescue of blocked DNA replication forks via replication fork reversal (RFR). RuvA specifically binds to HJ cruciform DNA, conferring on it an open structure. The RuvB hexamer acts as an ATP-dependent pump, pulling dsDNA into and through the RuvAB complex. HJ branch migration allows RuvC to scan DNA until it finds its consensus sequence, where it cleaves and resolves the cruciform DNA. This is Holliday junction branch migration complex subunit RuvA from Rhodopseudomonas palustris (strain BisB5).